The primary structure comprises 330 residues: 7,8-didemethyl-8-hydroxy-5-deazariboflavin synthase (330 aa).

The region spanning 13 to 253 is the Radical SAM core domain; the sequence is VTFSKNAFIP…EDISIQVPPN (241 aa). The [4Fe-4S] cluster site is built by Cys27, Cys31, and Cys34.

Belongs to the radical SAM superfamily. CofG family. As to quaternary structure, consists of two subunits, CofG and CofH. [4Fe-4S] cluster serves as cofactor.

It catalyses the reaction 5-amino-5-(4-hydroxybenzyl)-6-(D-ribitylimino)-5,6-dihydrouracil + S-adenosyl-L-methionine = 7,8-didemethyl-8-hydroxy-5-deazariboflavin + 5'-deoxyadenosine + L-methionine + NH4(+) + H(+). It functions in the pathway cofactor biosynthesis; coenzyme F0 biosynthesis. Functionally, catalyzes the radical-mediated synthesis of 7,8-didemethyl-8-hydroxy-5-deazariboflavin from 5-amino-5-(4-hydroxybenzyl)-6-(D-ribitylimino)-5,6-dihydrouracil. The chain is 7,8-didemethyl-8-hydroxy-5-deazariboflavin synthase from Methanococcus maripaludis (strain DSM 14266 / JCM 13030 / NBRC 101832 / S2 / LL).